Here is a 402-residue protein sequence, read N- to C-terminus: Elongation factor Tu (402 aa).

The 196-residue stretch at 16-211 folds into the tr-type G domain; that stretch reads KEHINIGTIG…AVDSYIDSPV (196 aa). Residues 25–32 form a G1 region; it reads GHVDHGKT. 25 to 32 provides a ligand contact to GTP; it reads GHVDHGKT. A Mg(2+)-binding site is contributed by Thr-32. The tract at residues 66–70 is G2; the sequence is GITIN. Positions 87–90 are G3; the sequence is DCPG. Residues 87-91 and 142-145 contribute to the GTP site; these read DCPGH and NKID. A G4 region spans residues 142 to 145; the sequence is NKID. The G5 stretch occupies residues 181 to 183; that stretch reads SAR.

Belongs to the TRAFAC class translation factor GTPase superfamily. Classic translation factor GTPase family. EF-Tu/EF-1A subfamily. As to quaternary structure, monomer.

Its subcellular location is the cytoplasm. It carries out the reaction GTP + H2O = GDP + phosphate + H(+). GTP hydrolase that promotes the GTP-dependent binding of aminoacyl-tRNA to the A-site of ribosomes during protein biosynthesis. The protein is Elongation factor Tu of Mesomycoplasma hyopneumoniae (strain 232) (Mycoplasma hyopneumoniae).